Consider the following 492-residue polypeptide: Phosphatidylinositol-glycan biosynthesis class W protein (492 aa).

The next 5 helical transmembrane spans lie at 26 to 46 (FILTLMPISVLFQRVVFATFF), 59 to 79 (FILEFFFIIVPFISAITFTEL), 82 to 102 (FLIVGMLITCLVVPMFAQKNV), 127 to 147 (YRAFVMAATCICILAVDFQVF), and 156 to 176 (TYGISLMDIGVGSVVLSGALV). Positions 185-216 (IEKQQKKKREEEEDDNDKINKTSSSSSSSSSA) are disordered. Residue asparagine 204 is glycosylated (N-linked (GlcNAc...) asparagine). The segment covering 205 to 216 (KTSSSSSSSSSA) has biased composition (low complexity). Residues 264 to 284 (YGLHWNFFFTLGFVSISLAFL) traverse the membrane as a helical segment. Residue asparagine 289 is glycosylated (N-linked (GlcNAc...) asparagine). 4 helical membrane passes run 290 to 310 (ISAILGVVLICVYQFLLNSFG), 331 to 351 (ICSFVGYLAIYLIGTKIGTEL), 364 to 384 (FATKLLISSIVFYILWILCEI), and 399 to 419 (VLAILSINLFNFSINILITLI). An N-linked (GlcNAc...) asparagine glycan is attached at asparagine 424. Helical transmembrane passes span 437-457 (LFIFLLGNILTGLINFSMKTI) and 464-484 (SMIIITSYTFALCLLAFILDY).

It belongs to the PIGW family.

The protein resides in the endoplasmic reticulum membrane. It participates in glycolipid biosynthesis; glycosylphosphatidylinositol-anchor biosynthesis. Functionally, probable acetyltransferase, which acetylates the inositol ring of phosphatidylinositol during biosynthesis of GPI-anchor. The sequence is that of Phosphatidylinositol-glycan biosynthesis class W protein from Dictyostelium discoideum (Social amoeba).